A 160-amino-acid polypeptide reads, in one-letter code: UPF0262 protein ELI_10965 (160 aa).

It belongs to the UPF0262 family.

This Erythrobacter litoralis (strain HTCC2594) protein is UPF0262 protein ELI_10965.